The sequence spans 711 residues: Early transcription factor 82 kDa subunit (711 aa).

The protein belongs to the poxviridae VETF large subunit family. In terms of assembly, heterodimer of a 70 kDa and a 82 kDa subunit. Part of the early transcription complex composed of ETF, RAP94, and the DNA-directed RNA polymerase.

The protein resides in the virion. Acts with RNA polymerase to initiate transcription from early gene promoters. Is recruited by the RPO-associated protein of 94 kDa (RAP94) to form the early transcription complex, which also contains the core RNA polymerase. ETF heterodimer binds to early gene promoters. This is Early transcription factor 82 kDa subunit (VETFL) from Oryctolagus cuniculus (Rabbit).